A 243-amino-acid polypeptide reads, in one-letter code: 4-hydroxy-tetrahydrodipicolinate reductase (243 aa).

NAD(+) is bound by residues glycine 9 to methionine 14, glycine 78 to serine 80, and alanine 104 to phenylalanine 107. Histidine 134 (proton donor/acceptor) is an active-site residue. Residue histidine 135 coordinates (S)-2,3,4,5-tetrahydrodipicolinate. Lysine 138 serves as the catalytic Proton donor. Glycine 144 to threonine 145 contributes to the (S)-2,3,4,5-tetrahydrodipicolinate binding site.

It belongs to the DapB family.

It is found in the cytoplasm. It catalyses the reaction (S)-2,3,4,5-tetrahydrodipicolinate + NAD(+) + H2O = (2S,4S)-4-hydroxy-2,3,4,5-tetrahydrodipicolinate + NADH + H(+). It carries out the reaction (S)-2,3,4,5-tetrahydrodipicolinate + NADP(+) + H2O = (2S,4S)-4-hydroxy-2,3,4,5-tetrahydrodipicolinate + NADPH + H(+). It functions in the pathway amino-acid biosynthesis; L-lysine biosynthesis via DAP pathway; (S)-tetrahydrodipicolinate from L-aspartate: step 4/4. In terms of biological role, catalyzes the conversion of 4-hydroxy-tetrahydrodipicolinate (HTPA) to tetrahydrodipicolinate. The protein is 4-hydroxy-tetrahydrodipicolinate reductase of Legionella pneumophila (strain Corby).